We begin with the raw amino-acid sequence, 460 residues long: Putative type II methyltransferase M.OihORF3336P (460 aa).

An SAM-dependent MTase C5-type domain is found at Pro15–Gly458. Residue Cys97 is part of the active site.

Belongs to the class I-like SAM-binding methyltransferase superfamily. C5-methyltransferase family.

The catalysed reaction is a 2'-deoxycytidine in DNA + S-adenosyl-L-methionine = a 5-methyl-2'-deoxycytidine in DNA + S-adenosyl-L-homocysteine + H(+). A methylase, recognizes the double-stranded sequence 5'-ACCGGT-3', methylates C-? on both strands. No endonuclease has been identified for this methylase. The sequence is that of Putative type II methyltransferase M.OihORF3336P from Oceanobacillus iheyensis (strain DSM 14371 / CIP 107618 / JCM 11309 / KCTC 3954 / HTE831).